The sequence spans 358 residues: MKNKIVFAPIGQGGGNIVDTLLGICGDYNALFINTSKKDLDSLKHAKHTYHIPYAEGCGKERKKAVGYAQTYYKQIIAQIMEKFSSCDIVIFVATMAGGTGSGITPPILGLAKQMYPNKHFGFVGVLPKATEDIDEHMNAIACWNDIMRSTNEGKDISIYLLDNNKREKESDINKEFATLFNDFMNMSESHAEGVVDEDEISKLLTMKKSNVILEFDDKEDIQVALAKSLKESIFAEYTTNTCEFMGISTTRVVDVEAIKSIVGYPRRTFKGYNSKKNIVVATGIEPQKTTVQMMNEIIEDKMKQRREVTSKSENMIIEPIALDDEDNKSVISSNEKEISIDNVEKEIDINDFFSKYM.

Residues 12 to 16, Thr-95, 99 to 101, Glu-132, Asn-164, Glu-170, and Asn-174 contribute to the GDP site; these read QGGGN and GTG. GTP is bound at residue Asn-182.

The protein belongs to the FtsZ family. TubZ subfamily. As to quaternary structure, monomer. In the presence of Mg(2+) and GTP assembles into 2-stranded filaments which coalesce into bundles. Binds a centromere-like site (tubC)-TubR complex. The TubZ-TubR-tubC complex bind to TubY which reshapes the filament bundles into rings. A later paper by the same group shows 4-stranded filament formation and suggests the 2-stranded form is a short-lived intermediate.

Its subcellular location is the host cytoplasm. The enzyme catalyses GTP + H2O = GDP + phosphate + H(+). Functionally, a tubulin-like, filament forming GTPase; the motor component of the type III partition system presumably used to ensure correct segregation of this bacteriophage. In the presence of Mg(2+) and GTP (or GTP-gamma-S) assembles into filaments which upon polymerization are almost exclusively bound to GDP. Filament formation is cooperative, requiring a critical concentration. Formation occurs very quickly and is followed by disassembly as GTP is consumed. Unlike its plasmid homolog in B.thuringiensis (AC Q8KNP3) GTP-gamma-S does not alter filament formation. When forced to assemble with GDP instead of GTP it makes much stiffer, thicker filaments. The filaments bind a DNA centromere-like site (tubC)-TubR complex which extends to surround the TubZ filaments. Highly dynamic filaments grow at the plus end and depolymerize at the minus end, a process called treadmilling. TubR-tubC complexes track the depolymerizing minus end of the filament, probably pulling phage DNA within the cell. This chain is Tubulin-like protein TubZ, found in Clostridium botulinum C phage (Clostridium botulinum C bacteriophage).